The primary structure comprises 392 residues: Phosphoglycerate kinase (392 aa).

Substrate-binding positions include 21 to 23 (DFN), arginine 36, 59 to 62 (HLGR), arginine 113, and arginine 146. ATP is bound by residues lysine 197, glutamate 319, and 345 to 348 (GGDT).

The protein belongs to the phosphoglycerate kinase family. Monomer.

The protein localises to the cytoplasm. The catalysed reaction is (2R)-3-phosphoglycerate + ATP = (2R)-3-phospho-glyceroyl phosphate + ADP. It functions in the pathway carbohydrate degradation; glycolysis; pyruvate from D-glyceraldehyde 3-phosphate: step 2/5. This Francisella tularensis subsp. novicida (strain U112) protein is Phosphoglycerate kinase.